A 422-amino-acid chain; its full sequence is Enolase (422 aa).

Q161 contacts (2R)-2-phosphoglycerate. E203 acts as the Proton donor in catalysis. Residues D240, E283, and D310 each contribute to the Mg(2+) site. Residues K335, R364, S365, and K386 each contribute to the (2R)-2-phosphoglycerate site. Residue K335 is the Proton acceptor of the active site.

The protein belongs to the enolase family. It depends on Mg(2+) as a cofactor.

Its subcellular location is the cytoplasm. The protein resides in the secreted. The protein localises to the cell surface. The catalysed reaction is (2R)-2-phosphoglycerate = phosphoenolpyruvate + H2O. The protein operates within carbohydrate degradation; glycolysis; pyruvate from D-glyceraldehyde 3-phosphate: step 4/5. Catalyzes the reversible conversion of 2-phosphoglycerate (2-PG) into phosphoenolpyruvate (PEP). It is essential for the degradation of carbohydrates via glycolysis. This Deinococcus geothermalis (strain DSM 11300 / CIP 105573 / AG-3a) protein is Enolase.